Reading from the N-terminus, the 311-residue chain is Olfactory receptor 8H1 (311 aa).

Over methionine 1–methionine 25 the chain is Extracellular. An N-linked (GlcNAc...) asparagine glycan is attached at asparagine 5. The helical transmembrane segment at alanine 26–isoleucine 46 threads the bilayer. The Cytoplasmic portion of the chain corresponds to leucine 47–glutamine 54. A helical transmembrane segment spans residues leucine 55 to threonine 75. The Extracellular portion of the chain corresponds to valine 76 to alanine 98. Cysteine 96 and cysteine 188 form a disulfide bridge. Residues glutamine 99 to tyrosine 119 form a helical membrane-spanning segment. Residues aspartate 120 to arginine 138 are Cytoplasmic-facing. A helical transmembrane segment spans residues leucine 139–valine 159. Residues valine 160 to isoleucine 196 lie on the Extracellular side of the membrane. Residues methionine 197 to serine 216 traverse the membrane as a helical segment. Residues tyrosine 217–alanine 236 lie on the Cytoplasmic side of the membrane. The chain crosses the membrane as a helical span at residues leucine 237–threonine 257. The Extracellular portion of the chain corresponds to tyrosine 258–aspartate 270. A helical membrane pass occupies residues glutamine 271–leucine 291. The Cytoplasmic portion of the chain corresponds to arginine 292 to arginine 311.

The protein belongs to the G-protein coupled receptor 1 family.

The protein localises to the cell membrane. Its function is as follows. Odorant receptor. This Homo sapiens (Human) protein is Olfactory receptor 8H1 (OR8H1).